A 398-amino-acid chain; its full sequence is Tryptophan synthase beta chain (398 aa).

Lysine 92 is subject to N6-(pyridoxal phosphate)lysine.

The protein belongs to the TrpB family. In terms of assembly, tetramer of two alpha and two beta chains. It depends on pyridoxal 5'-phosphate as a cofactor.

It carries out the reaction (1S,2R)-1-C-(indol-3-yl)glycerol 3-phosphate + L-serine = D-glyceraldehyde 3-phosphate + L-tryptophan + H2O. The protein operates within amino-acid biosynthesis; L-tryptophan biosynthesis; L-tryptophan from chorismate: step 5/5. In terms of biological role, the beta subunit is responsible for the synthesis of L-tryptophan from indole and L-serine. In Nitrosospira multiformis (strain ATCC 25196 / NCIMB 11849 / C 71), this protein is Tryptophan synthase beta chain.